Consider the following 500-residue polypeptide: Glycerol kinase (500 aa).

Residue Thr-12 participates in ADP binding. ATP is bound by residues Thr-12, Thr-13, and Ser-14. Thr-12 is a binding site for sn-glycerol 3-phosphate. Arg-16 is a binding site for ADP. The sn-glycerol 3-phosphate site is built by Arg-82, Glu-83, Tyr-134, and Asp-246. Positions 82, 83, 134, 246, and 247 each coordinate glycerol. Positions 268 and 312 each coordinate ADP. ATP-binding residues include Thr-268, Gly-312, Gln-316, and Gly-413. ADP-binding residues include Gly-413 and Asn-417.

Belongs to the FGGY kinase family.

The catalysed reaction is glycerol + ATP = sn-glycerol 3-phosphate + ADP + H(+). The protein operates within polyol metabolism; glycerol degradation via glycerol kinase pathway; sn-glycerol 3-phosphate from glycerol: step 1/1. Its activity is regulated as follows. Inhibited by fructose 1,6-bisphosphate (FBP). Functionally, key enzyme in the regulation of glycerol uptake and metabolism. Catalyzes the phosphorylation of glycerol to yield sn-glycerol 3-phosphate. This chain is Glycerol kinase, found in Saccharopolyspora erythraea (strain ATCC 11635 / DSM 40517 / JCM 4748 / NBRC 13426 / NCIMB 8594 / NRRL 2338).